A 799-amino-acid chain; its full sequence is Phenylalanine--tRNA ligase beta subunit (799 aa).

Residues 39–150 (GKGFSGVIVG…EHLQAGTALN (112 aa)) form the tRNA-binding domain. Positions 402–478 (FLELTIRCRL…RIYGYDHIPR (77 aa)) constitute a B5 domain. Mg(2+) is bound by residues Asp456, Asp462, Glu465, and Glu466. The region spanning 705 to 798 (AIYPGSERDW…VSQKFANDLK (94 aa)) is the FDX-ACB domain.

It belongs to the phenylalanyl-tRNA synthetase beta subunit family. Type 1 subfamily. In terms of assembly, tetramer of two alpha and two beta subunits. The cofactor is Mg(2+).

It is found in the cytoplasm. The enzyme catalyses tRNA(Phe) + L-phenylalanine + ATP = L-phenylalanyl-tRNA(Phe) + AMP + diphosphate + H(+). This chain is Phenylalanine--tRNA ligase beta subunit, found in Protochlamydia amoebophila (strain UWE25).